The following is a 220-amino-acid chain: Peptide methionine sulfoxide reductase MsrA (220 aa).

Residue cysteine 52 is part of the active site.

This sequence belongs to the MsrA Met sulfoxide reductase family.

It carries out the reaction L-methionyl-[protein] + [thioredoxin]-disulfide + H2O = L-methionyl-(S)-S-oxide-[protein] + [thioredoxin]-dithiol. It catalyses the reaction [thioredoxin]-disulfide + L-methionine + H2O = L-methionine (S)-S-oxide + [thioredoxin]-dithiol. Functionally, has an important function as a repair enzyme for proteins that have been inactivated by oxidation. Catalyzes the reversible oxidation-reduction of methionine sulfoxide in proteins to methionine. This Corynebacterium diphtheriae (strain ATCC 700971 / NCTC 13129 / Biotype gravis) protein is Peptide methionine sulfoxide reductase MsrA.